A 272-amino-acid chain; its full sequence is Sulfate transporter CysZ (272 aa).

Helical transmembrane passes span 29 to 49 (FVIIPILLNTILLCGLFWLFI), 66 to 86 (WLSFLSVILLTLSILTILLLF), 148 to 168 (IIALFLLSFIPLVGQTIVPVL), and 219 to 239 (FVPVINLLIMPVAVCGATLMW).

This sequence belongs to the CysZ family.

The protein localises to the cell inner membrane. Its function is as follows. High affinity, high specificity proton-dependent sulfate transporter, which mediates sulfate uptake. Provides the sulfur source for the cysteine synthesis pathway. This is Sulfate transporter CysZ from Haemophilus influenzae (strain 86-028NP).